The following is a 375-amino-acid chain: Trichodiene synthase (375 aa).

The protein belongs to the trichodiene synthase family.

The enzyme catalyses (2E,6E)-farnesyl diphosphate = trichodiene + diphosphate. It participates in sesquiterpene biosynthesis; trichothecene biosynthesis. Its function is as follows. TS is a member of the terpene cyclase group of enzymes. It catalyzes the isomerization and cyclization of farnesyl pyro-phosphate to form trichodiene, the first cyclic intermediate in the biosynthetic pathway for trichothecenes. It serves to branch trichothecene biosynthesis from the isoprenoid pathway. The polypeptide is Trichodiene synthase (TRI5) (Fusarium mesoamericanum).